Consider the following 155-residue polypeptide: NADH-ubiquinone oxidoreductase chain 6 (155 aa).

The next 4 membrane-spanning stretches (helical) occupy residues 1 to 21 (MLGS…PLAF), 42 to 62 (WISL…FIYV), 71 to 91 (FAVD…SFLV), and 121 to 141 (LTML…LLVI).

Belongs to the complex I subunit 6 family.

It is found in the mitochondrion membrane. It carries out the reaction a ubiquinone + NADH + 5 H(+)(in) = a ubiquinol + NAD(+) + 4 H(+)(out). Its function is as follows. Core subunit of the mitochondrial membrane respiratory chain NADH dehydrogenase (Complex I) that is believed to belong to the minimal assembly required for catalysis. Complex I functions in the transfer of electrons from NADH to the respiratory chain. The immediate electron acceptor for the enzyme is believed to be ubiquinone. The sequence is that of NADH-ubiquinone oxidoreductase chain 6 (ND6) from Artemia franciscana (Brine shrimp).